Here is a 915-residue protein sequence, read N- to C-terminus: Transferrin-binding protein A (915 aa).

The first 24 residues, 1 to 24, serve as a signal peptide directing secretion; sequence MQQQHLFRFNILCLSLMTALPAYA. The Periplasmic portion of the chain corresponds to 25-187; sequence ENVQAGQAQE…ADDVIGEGRQ (163 aa). Residues 38–45 carry the TonB box motif; it reads DTIQVKAK. Positions 51–176 constitute a TBDR plug domain; it reads RDNEVTGLGK…LAGSVAFQTK (126 aa). The plug loop, interacts with transferrin stretch occupies residues 121-139; sequence SYTAQAALGGTRTAGSSGA. The TBDR beta-barrel domain maps to 187 to 915; that stretch reads QWGIQSKTAY…NYTFSLEMKF (729 aa). A beta stranded membrane pass occupies residues 188-197; sequence WGIQSKTAYS. Over 198–203 the chain is Extracellular; sequence GKNRGL. The chain crosses the membrane as a beta stranded span at residues 204 to 213; the sequence is TQSIALAGRI. Topologically, residues 214–215 are periplasmic; that stretch reads GG. A beta stranded transmembrane segment spans residues 216–225; that stretch reads AEALLIHTGR. Residues 226 to 309 lie on the Extracellular side of the membrane; it reads RAGEIRAHED…FLADPLSYES (84 aa). The beta stranded transmembrane segment at 310 to 319 threads the bilayer; sequence RSWLFRPGFR. Residues 320–324 are Periplasmic-facing; that stretch reads FENKR. The chain crosses the membrane as a beta stranded span at residues 325–334; sequence HYIGGILEHT. The Extracellular portion of the chain corresponds to 335–406; the sequence is QQTFDTRDMT…VFYDETHTKS (72 aa). The tract at residues 351-361 is L3 helix finger, interacts with transferrin; sequence KAVFDANKKQA. A beta stranded membrane pass occupies residues 407–415; it reads RYGLEYVYT. Residues 416–423 are Periplasmic-facing; the sequence is NADKDTWA. A beta stranded transmembrane segment spans residues 424–433; sequence DYARLSYDRQ. The Extracellular segment spans residues 434–478; it reads GIGLDNHFQQTHCSADGSDKYCRPSADKPFSYYKSDRVIYGESHR. The beta stranded transmembrane segment at 479–488 threads the bilayer; the sequence is LLQAAFKKSF. Residues 489 to 494 lie on the Periplasmic side of the membrane; it reads DTAKIR. The beta stranded transmembrane segment at 495–504 threads the bilayer; it reads HNLSVNLGFD. Residues 505 to 583 are Extracellular-facing; it reads RFGSNLRHQD…PRSINGKSYY (79 aa). A disordered region spans residues 523-542; it reads AYSSNTPPQNNGKKISPNGS. The beta stranded transmembrane segment at 584 to 592 threads the bilayer; the sequence is AAVRDNVRL. Over 593–594 the chain is Periplasmic; that stretch reads GR. Residues 595-603 form a beta stranded membrane-spanning segment; sequence WADVGAGLR. At 604 to 623 the chain is on the extracellular side; that stretch reads YDYRSTHSDDGSVSTGTHRT. A beta stranded transmembrane segment spans residues 624 to 633; that stretch reads LSWNAGIVLK. Residues 634–637 are Periplasmic-facing; that stretch reads PTDW. The chain crosses the membrane as a beta stranded span at residues 638–647; it reads LDLTYRTSTG. Residues 648 to 675 are Extracellular-facing; that stretch reads FRLPSFAEMYGWRAGVQSKAVKIDPEKS. Residues 676–685 traverse the membrane as a beta stranded segment; the sequence is FNKEAGIVFK. Over 686–689 the chain is Periplasmic; the sequence is GDFG. A beta stranded transmembrane segment spans residues 690–699; the sequence is NLEASWFNNA. The Extracellular portion of the chain corresponds to 700-733; the sequence is YRDLIVRGYEAQIKDGKEEAKGDPAYLNAQSARI. Residues 734 to 743 form a beta stranded membrane-spanning segment; sequence TGINILGKID. The Periplasmic segment spans residues 744–755; sequence WNGVWDKLPEGW. The beta stranded transmembrane segment at 756–765 threads the bilayer; that stretch reads YSTFAYNRVR. The Extracellular portion of the chain corresponds to 766-790; that stretch reads VRDIKKRADRTDIQSHLFDAIQPSR. A beta stranded membrane pass occupies residues 791–799; it reads YVVGLGYDQ. The Periplasmic segment spans residues 800–802; it reads PEG. The beta stranded transmembrane segment at 803 to 811 threads the bilayer; that stretch reads KWGVNGMLT. At 812–845 the chain is on the extracellular side; that stretch reads YSKAKEITELLGSRALLNGNSRNTKATARRTRPW. The chain crosses the membrane as a beta stranded span at residues 846–855; that stretch reads YIVDVSGYYT. The Periplasmic segment spans residues 856 to 860; the sequence is VKKHF. Residues 861–870 traverse the membrane as a beta stranded segment; it reads TLRAGVYNLL. At 871–905 the chain is on the extracellular side; that stretch reads NYRYVTWENVRQTAGGAVNQHKNVGVYNRYAAPGR. The TonB C-terminal box signature appears at 898 to 915; the sequence is NRYAAPGRNYTFSLEMKF. Residues 906–915 traverse the membrane as a beta stranded segment; it reads NYTFSLEMKF.

The protein belongs to the TonB-dependent receptor family. As to quaternary structure, binds both human apo- and holo-transferrin (TF), via the TF C-terminus. Forms a large complex with TF and TbpB.

Its subcellular location is the cell outer membrane. Neisseria acquires iron by extracting it from serum transferrin (TF) in its human host. Acts as a TF receptor and is required for TF utilization. Binds both apo- and holo-TF, via the TF C-terminus. This is Transferrin-binding protein A from Neisseria meningitidis serogroup B (strain ATCC BAA-335 / MC58).